Here is a 549-residue protein sequence, read N- to C-terminus: MFS-type transporter TwmF (549 aa).

Transmembrane regions (helical) follow at residues 29 to 49 (IVIG…VLTI), 63 to 83 (NFIW…PLFG), 99 to 119 (VAIF…AMLI), and 126 to 146 (GVGS…LVPL). N-linked (GlcNAc...) asparagine glycosylation occurs at Asn151. A run of 10 helical transmembrane segments spans residues 155 to 175 (ILMS…GAIV), 182 to 202 (WVFY…FIFL), 221 to 241 (LVGN…LSYA), 249 to 269 (SWHT…FAGL), 291 to 311 (IILA…LFFL), 328 to 348 (VALL…AIAL), 355 to 375 (KPVH…FTLF), 390 to 410 (IVAF…QAFI), 421 to 441 (AWYF…AAIF), and 502 to 522 (VSIA…DVGL).

The protein belongs to the major facilitator superfamily.

It localises to the membrane. MFS efflux transporter; part of the gene cluster that mediates the biosynthesis of wortmanamides A and B, reduced long-chain polyketides amidated with a specific omega-amino acid, 5-aminopentanoic acid (5PA). The protein is MFS-type transporter TwmF of Talaromyces wortmannii (Penicillium wortmannii).